A 474-amino-acid polypeptide reads, in one-letter code: PRAME family member 17 (474 aa).

The LRR 1; degenerate repeat unit spans residues 97–124; the sequence is RWKLQVLDLRDVDGNFWTIWSGARALSC. The LRR 2; degenerate repeat unit spans residues 179-203; the sequence is HLCCNKVQNYSMPTSSFRNLLKRVY. Residues 204–230 form an LRR 3; degenerate repeat; it reads PDSIQELEIKRKCSLNKTGKFAPYLSQ. An LRR 4; degenerate repeat occupies 231 to 265; the sequence is MSNLRKLFLAFGYDDELYVSGQQQFVPDLDCPFLC. LRR repeat units lie at residues 266 to 291, 292 to 323, 324 to 342, 348 to 375, and 376 to 400; these read LYYP…LRCL, KNPL…SQLK, ELHL…PLGA, AATL…ALSR, and CSQL…LLCH.

The protein belongs to the PRAME family.

This chain is PRAME family member 17, found in Homo sapiens (Human).